A 119-amino-acid chain; its full sequence is Chorion class CA protein ERA.1 (119 aa).

An N-terminal signal peptide occupies residues 1–21 (MSTFAVLLLCVQACLIQNVYS). The segment at 22–55 (QCLGRVGPGGPPLGPYGGPLGGPGYGPVGYGGCG) is left arm. Positions 56 to 103 (GYGGSGIGNVAVAGELPVAGSTGVMGQVPVIGAVEFAGPACAVGSVSI) are central domain. Residues 104–119 (SGACGPTCGCGGSPYY) are right arm.

Belongs to the chorion protein family.

Functionally, this protein is one of many from the eggshell of the silk moth. The sequence is that of Chorion class CA protein ERA.1 (ERA.1) from Bombyx mori (Silk moth).